The sequence spans 503 residues: Cytochrome P450 3A17 (503 aa).

Cys442 is a binding site for heme.

This sequence belongs to the cytochrome P450 family. Requires heme as cofactor.

It localises to the endoplasmic reticulum membrane. It is found in the microsome membrane. It carries out the reaction an organic molecule + reduced [NADPH--hemoprotein reductase] + O2 = an alcohol + oxidized [NADPH--hemoprotein reductase] + H2O + H(+). Cytochromes P450 are a group of heme-thiolate monooxygenases. In liver microsomes, this enzyme is involved in an NADPH-dependent electron transport pathway. It oxidizes a variety of structurally unrelated compounds, including steroids, fatty acids, and xenobiotics. The polypeptide is Cytochrome P450 3A17 (CYP3A17) (Cavia porcellus (Guinea pig)).